Here is a 331-residue protein sequence, read N- to C-terminus: Vitamin B12 import system permease protein BtuC (331 aa).

Transmembrane regions (helical) follow at residues 18 to 38 (WLFG…CAGE), 64 to 84 (LAVL…QALF), 91 to 111 (PGLL…VLLG), 114 to 134 (VLPG…ITFI), 149 to 169 (LLAG…AVYF), 194 to 214 (LWLM…SQPL), 243 to 263 (GWMV…GLVI), 277 to 297 (VLLP…DIIA), and 305 to 325 (ELPI…WLLL).

Belongs to the binding-protein-dependent transport system permease family. FecCD subfamily. In terms of assembly, the complex is composed of two ATP-binding proteins (BtuD), two transmembrane proteins (BtuC) and a solute-binding protein (BtuF).

It localises to the cell inner membrane. Part of the ABC transporter complex BtuCDF involved in vitamin B12 import. Involved in the translocation of the substrate across the membrane. The sequence is that of Vitamin B12 import system permease protein BtuC from Klebsiella pneumoniae subsp. pneumoniae (strain ATCC 700721 / MGH 78578).